We begin with the raw amino-acid sequence, 122 residues long: E3 ubiquitin-protein ligase PPP1R11 (122 aa).

The span at 1 to 12 shows a compositional bias: polar residues; it reads MAEVPGTSSETI. Positions 1–33 are disordered; sequence MAEVPGTSSETITETVQTGTPPPPQQEGRSLTI. Threonine 20 bears the Phosphothreonine mark. Residues 55–65 form an atypical RING finger domain 1 region; that stretch reads HLGRRSSKCCC. A disordered region spans residues 72–122; that stretch reads QFGESSSESEGDDEEGCGSAHCILGHGRRGHGQREGGGTTVPPSSGGTNPH. Residues 78–87 show a composition bias toward acidic residues; that stretch reads SESEGDDEEG. An atypical RING finger domain 2 region spans residues 88–97; that stretch reads CGSAHCILGH. Over residues 111-122 the composition is skewed to low complexity; it reads TVPPSSGGTNPH.

The catalysed reaction is S-ubiquitinyl-[E2 ubiquitin-conjugating enzyme]-L-cysteine + [acceptor protein]-L-lysine = [E2 ubiquitin-conjugating enzyme]-L-cysteine + N(6)-ubiquitinyl-[acceptor protein]-L-lysine.. Its pathway is protein modification; protein ubiquitination. Functionally, atypical E3 ubiquitin-protein ligase which ubiquitinates TLR2 at 'Lys-754' leading to its degradation by the proteasome. Inhibitor of protein phosphatase 1. The sequence is that of E3 ubiquitin-protein ligase PPP1R11 (ppp1r11) from Danio rerio (Zebrafish).